The following is a 734-amino-acid chain: Adhesion G protein-coupled receptor E5 (734 aa).

The signal sequence occupies residues 1–26; it reads MGGPHGGPFLLFHVLCFLLTLSEVGS. The Extracellular segment spans residues 27–449; the sequence is QNSKACALPC…VEDPKLALIT (423 aa). The EGF-like 1 domain maps to 28–70; it reads NSKACALPCPPNSSCVNGTACRCAPGFISFSGEIFTDPLESCD. Cystine bridges form between Cys-32–Cys-42, Cys-36–Cys-48, Cys-50–Cys-69, Cys-75–Cys-89, Cys-83–Cys-98, Cys-100–Cys-121, Cys-127–Cys-140, Cys-134–Cys-149, and Cys-151–Cys-170. N-linked (GlcNAc...) asparagine glycans are attached at residues Asn-39 and Asn-44. Residues 71–122 enclose the EGF-like 2; calcium-binding domain; sequence DINECGPPSPVDCGSSADCQNTEGGYYCTCSPGYEPVSGAMIFRNESENTCR. N-linked (GlcNAc...) asparagine glycans are attached at residues Asn-115 and Asn-136. The EGF-like 3; calcium-binding domain maps to 123-171; it reads DVDECSSGQHQCHNSTVCFNTVGSYTCHCREGWEPKHGLKNKQKDTICK. Residues 265-441 form the GAIN-B domain; it reads TYRSLDNTEL…AILMAHYDVE (177 aa). N-linked (GlcNAc...) asparagine glycosylation is found at Asn-285, Asn-327, Asn-372, Asn-403, and Asn-418. 2 cysteine pairs are disulfide-bonded: Cys-393–Cys-423 and Cys-411–Cys-425. A GPS region spans residues 393–441; that stretch reads CAFWKKDSNGNGSWATTGCWKMGRGNGSITCQCSHLSSFAILMAHYDVE. The chain crosses the membrane as a helical span at residues 450-470; it reads KVGLALSLACLLLCILTFLLV. Residues 471-478 are Cytoplasmic-facing; it reads RPIQGSRT. Residues 479 to 499 form a helical membrane-spanning segment; the sequence is TVHLHLCICLFVGSAIFLAGI. Topologically, residues 500 to 519 are extracellular; sequence ENEGGEVGTRCRLVAVLLHY. The chain crosses the membrane as a helical span at residues 520–540; the sequence is CFLAAFCWMSLEGVELYFLVV. Residues 541 to 550 lie on the Cytoplasmic side of the membrane; sequence RVFQGQGMRK. A helical transmembrane segment spans residues 551 to 571; the sequence is LWLCLIGYGVPLIIVGISAGA. The Extracellular segment spans residues 572 to 593; the sequence is YSKGYGREKFCWLNFEGGFLWS. The chain crosses the membrane as a helical span at residues 594–614; sequence FVGPVTFIVLGNAIIFVITVW. Over 615 to 637 the chain is Cytoplasmic; that stretch reads KLTQKFSEINPDIKKLKKARVLT. Residues 638–658 form a helical membrane-spanning segment; the sequence is ITAIAQLFVLGCTWVFGLLLF. At 659 to 662 the chain is on the extracellular side; the sequence is NPES. Residues 663–683 traverse the membrane as a helical segment; it reads WVLSYIFSILNCLQGFFLFVL. Residues 684–734 are Cytoplasmic-facing; the sequence is YCLLNKKVREEYRKWACMVAGNKYSEFATTTSGSGSSHNQTQALRPSESGM. A disordered region spans residues 712-734; sequence TTTSGSGSSHNQTQALRPSESGM. At Thr-713 the chain carries Phosphothreonine. Ser-715 is subject to Phosphoserine. Phosphothreonine is present on Thr-724. Ser-730 and Ser-732 each carry phosphoserine.

Belongs to the G-protein coupled receptor 2 family. LN-TM7 subfamily. Forms a heterodimer, consisting of a large extracellular region (alpha subunit) non-covalently linked to a seven-transmembrane moiety (beta subunit). Interacts with complement decay-accelerating factor (DAF) and with chondroitin sulfate. Proteolytically cleaved into 2 subunits, an extracellular alpha subunit and a seven-transmembrane subunit.

Its subcellular location is the cell membrane. The protein resides in the secreted. It is found in the extracellular space. Receptor potentially involved in both adhesion and signaling processes early after leukocyte activation. Plays an essential role in leukocyte migration. The chain is Adhesion G protein-coupled receptor E5 from Bos taurus (Bovine).